A 197-amino-acid chain; its full sequence is Glycerol-3-phosphate acyltransferase (197 aa).

The next 4 helical transmembrane spans lie at Met-1 to Val-21, Leu-69 to Gly-89, Val-110 to Leu-130, and Val-152 to Phe-172.

Belongs to the PlsY family. In terms of assembly, probably interacts with PlsX.

It is found in the cell membrane. The catalysed reaction is an acyl phosphate + sn-glycerol 3-phosphate = a 1-acyl-sn-glycero-3-phosphate + phosphate. It functions in the pathway lipid metabolism; phospholipid metabolism. Its function is as follows. Catalyzes the transfer of an acyl group from acyl-phosphate (acyl-PO(4)) to glycerol-3-phosphate (G3P) to form lysophosphatidic acid (LPA). This enzyme utilizes acyl-phosphate as fatty acyl donor, but not acyl-CoA or acyl-ACP. This is Glycerol-3-phosphate acyltransferase from Geobacillus kaustophilus (strain HTA426).